The sequence spans 305 residues: Glycine--tRNA ligase alpha subunit (305 aa).

The protein belongs to the class-II aminoacyl-tRNA synthetase family. In terms of assembly, tetramer of two alpha and two beta subunits.

Its subcellular location is the cytoplasm. The catalysed reaction is tRNA(Gly) + glycine + ATP = glycyl-tRNA(Gly) + AMP + diphosphate. The polypeptide is Glycine--tRNA ligase alpha subunit (Streptococcus pneumoniae (strain 70585)).